The primary structure comprises 85 residues: Large ribosomal subunit protein bL27 (85 aa).

It belongs to the bacterial ribosomal protein bL27 family.

This chain is Large ribosomal subunit protein bL27, found in Solibacter usitatus (strain Ellin6076).